Consider the following 565-residue polypeptide: Tetratricopeptide repeat protein 39A (565 aa).

TPR repeat units lie at residues 271–304 (AIFL…QQVW), 461–494 (CLIQ…EKKL), and 502–535 (PNAL…YKVY).

This sequence belongs to the TTC39 family.

This Danio rerio (Zebrafish) protein is Tetratricopeptide repeat protein 39A (ttc39a).